Reading from the N-terminus, the 232-residue chain is Putative uridine kinase DAS2 (232 aa).

An ATP-binding site is contributed by 17-24; the sequence is GGHATGVG.

This sequence belongs to the uridine kinase family.

The protein resides in the cytoplasm. The protein localises to the nucleus. The enzyme catalyses uridine + ATP = UMP + ADP + H(+). It catalyses the reaction cytidine + ATP = CMP + ADP + H(+). It functions in the pathway pyrimidine metabolism; CTP biosynthesis via salvage pathway; CTP from cytidine: step 1/3. The protein operates within pyrimidine metabolism; UMP biosynthesis via salvage pathway; UMP from uridine: step 1/1. In terms of biological role, putative uridine kinase identified in a screen for mutants with increased levels of rDNA transcription. This Saccharomyces cerevisiae (strain ATCC 204508 / S288c) (Baker's yeast) protein is Putative uridine kinase DAS2 (DAS2).